We begin with the raw amino-acid sequence, 461 residues long: L-seryl-tRNA(Sec) selenium transferase (461 aa).

Lys294 is subject to N6-(pyridoxal phosphate)lysine.

The protein belongs to the SelA family. Requires pyridoxal 5'-phosphate as cofactor.

It localises to the cytoplasm. The catalysed reaction is L-seryl-tRNA(Sec) + selenophosphate + H(+) = L-selenocysteinyl-tRNA(Sec) + phosphate. It participates in aminoacyl-tRNA biosynthesis; selenocysteinyl-tRNA(Sec) biosynthesis; selenocysteinyl-tRNA(Sec) from L-seryl-tRNA(Sec) (bacterial route): step 1/1. In terms of biological role, converts seryl-tRNA(Sec) to selenocysteinyl-tRNA(Sec) required for selenoprotein biosynthesis. The polypeptide is L-seryl-tRNA(Sec) selenium transferase (Haemophilus influenzae (strain 86-028NP)).